A 336-amino-acid polypeptide reads, in one-letter code: MQPDIAPNPHSTRPGLSRRFSVAPMMDWTDHHCRYFMRLLSSQALLYTEMVTTGALLHGDRERFLRHDETEHPLALQLGGSTAAGLAACARLAEAAGYDEVNLNVGCPSDRVQNNMIGACLMAHPQLVADCVKAMRDAVGIPVTVKHRIGINGRDSYAELCDFVGTVHDAGCQSFTVHARIAILEGLSPKENRDIPPLRYDVVAQLKTDFPELEIVLNGGIKTLEQCSEHLQTFDGVMLGREAYHNPYLLAQVDQQLFGSVAPVISRHAALESMRPYIAAHIASGGNMHHVTRHMLGLGLGFPGARRFRQLLSVDIHKAENPLLLLDQAAKFLEGH.

Residues 24-26 and Q77 each bind FMN; that span reads PMM. The active-site Proton donor is the C107. FMN-binding positions include K146, H178, 218–220, and 240–241; these read NGG and GR.

The protein belongs to the Dus family. DusA subfamily. FMN serves as cofactor.

The enzyme catalyses 5,6-dihydrouridine(20) in tRNA + NADP(+) = uridine(20) in tRNA + NADPH + H(+). It catalyses the reaction 5,6-dihydrouridine(20) in tRNA + NAD(+) = uridine(20) in tRNA + NADH + H(+). It carries out the reaction 5,6-dihydrouridine(20a) in tRNA + NADP(+) = uridine(20a) in tRNA + NADPH + H(+). The catalysed reaction is 5,6-dihydrouridine(20a) in tRNA + NAD(+) = uridine(20a) in tRNA + NADH + H(+). In terms of biological role, catalyzes the synthesis of 5,6-dihydrouridine (D), a modified base found in the D-loop of most tRNAs, via the reduction of the C5-C6 double bond in target uridines. Specifically modifies U20 and U20a in tRNAs. In Pseudomonas syringae pv. tomato (strain ATCC BAA-871 / DC3000), this protein is tRNA-dihydrouridine(20/20a) synthase.